The chain runs to 513 residues: Putative ribose/galactose/methyl galactoside import ATP-binding protein 2 (513 aa).

ABC transporter domains follow at residues 24-260 (LTAE…VGRE) and 270-510 (VPIG…VMEL). An ATP-binding site is contributed by 56–63 (GENGAGKS).

Belongs to the ABC transporter superfamily. Carbohydrate importer 2 (CUT2) (TC 3.A.1.2) family.

It is found in the cell inner membrane. It catalyses the reaction D-ribose(out) + ATP + H2O = D-ribose(in) + ADP + phosphate + H(+). The catalysed reaction is D-galactose(out) + ATP + H2O = D-galactose(in) + ADP + phosphate + H(+). In terms of biological role, part of an ABC transporter complex involved in carbohydrate import. Could be involved in ribose, galactose and/or methyl galactoside import. Responsible for energy coupling to the transport system. This is Putative ribose/galactose/methyl galactoside import ATP-binding protein 2 from Rhizobium meliloti (strain 1021) (Ensifer meliloti).